The chain runs to 146 residues: Anti-sigma F factor (146 aa).

Belongs to the anti-sigma-factor family.

It carries out the reaction L-seryl-[protein] + ATP = O-phospho-L-seryl-[protein] + ADP + H(+). The enzyme catalyses L-threonyl-[protein] + ATP = O-phospho-L-threonyl-[protein] + ADP + H(+). In terms of biological role, binds to sigma F and blocks its ability to form an RNA polymerase holoenzyme (E-sigma F). Phosphorylates SpoIIAA on a serine residue. This phosphorylation may enable SpoIIAA to act as an anti-anti-sigma factor that counteracts SpoIIAB and thus releases sigma F from inhibition. This chain is Anti-sigma F factor, found in Bacillus velezensis (strain DSM 23117 / BGSC 10A6 / LMG 26770 / FZB42) (Bacillus amyloliquefaciens subsp. plantarum).